An 89-amino-acid polypeptide reads, in one-letter code: Small ribosomal subunit protein bS20 (89 aa).

This sequence belongs to the bacterial ribosomal protein bS20 family.

Functionally, binds directly to 16S ribosomal RNA. This chain is Small ribosomal subunit protein bS20, found in Solidesulfovibrio magneticus (strain ATCC 700980 / DSM 13731 / RS-1) (Desulfovibrio magneticus).